Consider the following 227-residue polypeptide: Chloronitrobenzene nitroreductase (227 aa).

14–18 (RRTKR) is an FMN binding site. Residue S44 participates in NADP(+) binding. FMN-binding positions include 172–173 (GL) and R215.

It belongs to the nitroreductase family. FMN is required as a cofactor.

It catalyses the reaction N-phenylhydroxylamine + 2 NADP(+) + H2O = nitrobenzene + 2 NADPH + 2 H(+). The protein operates within xenobiotic degradation; nitrobenzene degradation. It functions in the pathway xenobiotic degradation; 4-chloronitrobenzene degradation. Functionally, involved in the biodegradation of chlorinated nitroaromatic compounds. Catalyzes the reduction of 4-chloronitrobenzene to yield 1-hydroxylamino-4-chlorobenzene. Probably also able to catalyze the two-electron reduction of nitrobenzene (NB) to produce a nitrosobenzene (NOB) intermediate, which is immediately reduced to hydroxylaminobenzene (HAB) by a second two-electron transfer. In Comamonas testosteroni (Pseudomonas testosteroni), this protein is Chloronitrobenzene nitroreductase.